Here is a 178-residue protein sequence, read N- to C-terminus: MEDRPSADEVLLIGTVVDAFGLHGEIKVRSVTDRVDHLRHHVQTVFVGEERRPFPLQRIREPKTGVLILTLGGVTDRTMAEALRGAEVTIRECDAAPLEADEYFIHQLYGLRVVESSGAEIGIVREVLQTGANDVIVVERHGRSDTLLPMIHDVVESLDVAAGQIVVRLLPGLIDEEG.

A PRC barrel domain is found at 100–173 (ADEYFIHQLY…QIVVRLLPGL (74 aa)).

The protein belongs to the RimM family. Binds ribosomal protein uS19.

It is found in the cytoplasm. In terms of biological role, an accessory protein needed during the final step in the assembly of 30S ribosomal subunit, possibly for assembly of the head region. Essential for efficient processing of 16S rRNA. May be needed both before and after RbfA during the maturation of 16S rRNA. It has affinity for free ribosomal 30S subunits but not for 70S ribosomes. In Roseiflexus castenholzii (strain DSM 13941 / HLO8), this protein is Ribosome maturation factor RimM.